A 210-amino-acid polypeptide reads, in one-letter code: Thiamine-phosphate synthase (210 aa).

4-amino-2-methyl-5-(diphosphooxymethyl)pyrimidine-binding positions include 38 to 42 (QFREK) and Asn-70. Mg(2+) is bound by residues Asp-71 and Asp-90. Ser-107 is a 4-amino-2-methyl-5-(diphosphooxymethyl)pyrimidine binding site. Residue 132-134 (TKT) participates in 2-[(2R,5Z)-2-carboxy-4-methylthiazol-5(2H)-ylidene]ethyl phosphate binding. A 4-amino-2-methyl-5-(diphosphooxymethyl)pyrimidine-binding site is contributed by Lys-135. 183 to 184 (IS) lines the 2-[(2R,5Z)-2-carboxy-4-methylthiazol-5(2H)-ylidene]ethyl phosphate pocket.

This sequence belongs to the thiamine-phosphate synthase family. Mg(2+) serves as cofactor.

It catalyses the reaction 2-[(2R,5Z)-2-carboxy-4-methylthiazol-5(2H)-ylidene]ethyl phosphate + 4-amino-2-methyl-5-(diphosphooxymethyl)pyrimidine + 2 H(+) = thiamine phosphate + CO2 + diphosphate. It carries out the reaction 2-(2-carboxy-4-methylthiazol-5-yl)ethyl phosphate + 4-amino-2-methyl-5-(diphosphooxymethyl)pyrimidine + 2 H(+) = thiamine phosphate + CO2 + diphosphate. The enzyme catalyses 4-methyl-5-(2-phosphooxyethyl)-thiazole + 4-amino-2-methyl-5-(diphosphooxymethyl)pyrimidine + H(+) = thiamine phosphate + diphosphate. It functions in the pathway cofactor biosynthesis; thiamine diphosphate biosynthesis; thiamine phosphate from 4-amino-2-methyl-5-diphosphomethylpyrimidine and 4-methyl-5-(2-phosphoethyl)-thiazole: step 1/1. Functionally, condenses 4-methyl-5-(beta-hydroxyethyl)thiazole monophosphate (THZ-P) and 2-methyl-4-amino-5-hydroxymethyl pyrimidine pyrophosphate (HMP-PP) to form thiamine monophosphate (TMP). In Archaeoglobus fulgidus (strain ATCC 49558 / DSM 4304 / JCM 9628 / NBRC 100126 / VC-16), this protein is Thiamine-phosphate synthase.